A 272-amino-acid polypeptide reads, in one-letter code: Cytosolic Fe-S cluster assembly factor NUBP2 (272 aa).

23–30 (GKGGVGKS) provides a ligand contact to ATP. [4Fe-4S] cluster contacts are provided by C197 and C200.

It belongs to the Mrp/NBP35 ATP-binding proteins family. NUBP2/CFD1 subfamily. As to quaternary structure, heterotetramer of 2 NUBP1 and 2 NUBP2 chains. It depends on [4Fe-4S] cluster as a cofactor.

It is found in the cytoplasm. Component of the cytosolic iron-sulfur (Fe/S) protein assembly (CIA) machinery. Required for maturation of extramitochondrial Fe-S proteins. The NUBP1-NUBP2 heterotetramer forms a Fe-S scaffold complex, mediating the de novo assembly of an Fe-S cluster and its transfer to target apoproteins. This is Cytosolic Fe-S cluster assembly factor NUBP2 from Gallus gallus (Chicken).